A 121-amino-acid chain; its full sequence is Small ribosomal subunit protein uS11 (121 aa).

It belongs to the universal ribosomal protein uS11 family. In terms of assembly, part of the 30S ribosomal subunit. Interacts with proteins S7 and S18. Binds to IF-3.

Located on the platform of the 30S subunit, it bridges several disparate RNA helices of the 16S rRNA. Forms part of the Shine-Dalgarno cleft in the 70S ribosome. This is Small ribosomal subunit protein uS11 from Mycoplasmoides gallisepticum (strain R(low / passage 15 / clone 2)) (Mycoplasma gallisepticum).